The following is a 316-amino-acid chain: UPF0761 membrane protein PM1616 (316 aa).

The next 6 membrane-spanning stretches (helical) occupy residues 36–56 (MLAL…FPVF), 92–112 (QMSA…INSI), 128–148 (LVFS…LIGA), 172–192 (ILSF…YTVV), 204–224 (IGAL…LWYV), and 236–256 (AMAT…VILI).

The protein belongs to the UPF0761 family.

The protein resides in the cell inner membrane. The polypeptide is UPF0761 membrane protein PM1616 (Pasteurella multocida (strain Pm70)).